The following is a 230-amino-acid chain: UPF0173 metal-dependent hydrolase TM1040_1920 (230 aa).

Belongs to the UPF0173 family.

The polypeptide is UPF0173 metal-dependent hydrolase TM1040_1920 (Ruegeria sp. (strain TM1040) (Silicibacter sp.)).